A 482-amino-acid chain; its full sequence is 6-phosphogluconate dehydrogenase, decarboxylating (482 aa).

NADP(+) contacts are provided by residues 17-22 (GLAVMG), 40-42 (NRS), 82-84 (VKA), and Asn-110. Substrate-binding positions include Asn-110 and 136–138 (SGG). Catalysis depends on Lys-193, which acts as the Proton acceptor. A substrate-binding site is contributed by 196 to 197 (HN). Glu-200 serves as the catalytic Proton donor. Residues Tyr-201, Lys-272, Arg-299, Arg-457, and His-463 each coordinate substrate.

Belongs to the 6-phosphogluconate dehydrogenase family. As to quaternary structure, homodimer.

The enzyme catalyses 6-phospho-D-gluconate + NADP(+) = D-ribulose 5-phosphate + CO2 + NADPH. It participates in carbohydrate degradation; pentose phosphate pathway; D-ribulose 5-phosphate from D-glucose 6-phosphate (oxidative stage): step 3/3. Catalyzes the oxidative decarboxylation of 6-phosphogluconate to ribulose 5-phosphate and CO(2), with concomitant reduction of NADP to NADPH. The chain is 6-phosphogluconate dehydrogenase, decarboxylating (gnd) from Synechocystis sp. (strain ATCC 27184 / PCC 6803 / Kazusa).